A 341-amino-acid chain; its full sequence is UDP-N-acetyl-alpha-D-glucosaminouronate 4-epimerase (341 aa).

9 residues coordinate NAD(+): F27, I28, D47, A50, T51, G52, D78, I79, and Q98. Residue S103 coordinates UDP-N-acetyl-alpha-D-galactosamine. T117 contacts NAD(+). UDP-N-acetyl-alpha-D-galactosamine-binding residues include S142, S143, and Y166. NAD(+) contacts are provided by Y166 and K170. Y166 (proton acceptor) is an active-site residue. N195 is a UDP-N-acetyl-alpha-D-galactosamine binding site. Residue V196 participates in NAD(+) binding. The UDP-N-acetyl-alpha-D-galactosamine site is built by V210, Y225, N227, R234, R299, and D302.

The protein belongs to the NAD(P)-dependent epimerase/dehydratase family. Homodimer. NAD(+) is required as a cofactor.

It carries out the reaction UDP-2-acetamido-2-deoxy-alpha-D-glucuronate = UDP-2-acetamido-2-deoxy-alpha-D-galacturonate. It catalyses the reaction UDP-N-acetyl-alpha-D-glucosamine = UDP-N-acetyl-alpha-D-galactosamine. Its pathway is bacterial outer membrane biogenesis; LPS O-antigen biosynthesis. Its function is as follows. Epimerase required for the biosynthesis of the B-band O antigen of serotype O6 lipopolysaccharide. Catalyzes the reversible epimerization of UDP-N-acetylglucosaminuronic acid (UDP-GlcNAcA) to UDP-N-acetylgalactosaminuronic acid (UDP-GalNAcA). Also catalyzes the reversible epimerization of UDP-N-acetylglucosamine (UDP-GlcNAc) to UDP-N-acetylgalactosamine (UDP-GalNAc). Has very low epimerase activity with UDP-glucose (UDP-Glc) and UDP-galactose (UDP-Gal). In Pseudomonas aeruginosa, this protein is UDP-N-acetyl-alpha-D-glucosaminouronate 4-epimerase.